The chain runs to 338 residues: Fe(3+)-binding periplasmic protein (338 aa).

The first 26 residues, 1 to 26, serve as a signal peptide directing secretion; the sequence is MKLRISSLGPVALLASSMMLAFGAQA. Residues histidine 40, glutamate 88, tyrosine 224, and tyrosine 225 each contribute to the Fe cation site.

This sequence belongs to the bacterial solute-binding protein 1 family. In terms of assembly, the complex is composed of two ATP-binding proteins (FbpC), two transmembrane proteins (FbpB) and a solute-binding protein (FbpA).

The protein localises to the periplasm. Its function is as follows. Part of the ABC transporter complex FbpABC (TC 3.A.1.10.1) involved in Fe(3+) ions import. This protein specifically binds Fe(3+) and is involved in its transmembrane transport. This chain is Fe(3+)-binding periplasmic protein (fbpA), found in Serratia marcescens.